Here is a 167-residue protein sequence, read N- to C-terminus: CS6 fimbrial subunit B (167 aa).

The first 21 residues, 1–21 (MLKKIIPAIVLIAGTSGVVNA), serve as a signal peptide directing secretion.

Its subcellular location is the fimbrium. The sequence is that of CS6 fimbrial subunit B (cssB) from Escherichia coli.